Reading from the N-terminus, the 345-residue chain is Succinylglutamate desuccinylase (345 aa).

Residues His63, Glu66, and His160 each contribute to the Zn(2+) site. Residue Glu224 is part of the active site.

It belongs to the AspA/AstE family. Succinylglutamate desuccinylase subfamily. The cofactor is Zn(2+).

It carries out the reaction N-succinyl-L-glutamate + H2O = L-glutamate + succinate. The protein operates within amino-acid degradation; L-arginine degradation via AST pathway; L-glutamate and succinate from L-arginine: step 5/5. Transforms N(2)-succinylglutamate into succinate and glutamate. The polypeptide is Succinylglutamate desuccinylase (Shewanella woodyi (strain ATCC 51908 / MS32)).